The primary structure comprises 374 residues: Glutamate 5-kinase (374 aa).

Lys9 contributes to the ATP binding site. Residues Ser49, Asp136, and Asn148 each contribute to the substrate site. Residues 168 to 169 (TD) and 210 to 216 (TGGMRSK) each bind ATP. In terms of domain architecture, PUA spans 276–354 (SGTITVDSGA…EEARQYSYLH (79 aa)).

The protein belongs to the glutamate 5-kinase family.

Its subcellular location is the cytoplasm. The enzyme catalyses L-glutamate + ATP = L-glutamyl 5-phosphate + ADP. It functions in the pathway amino-acid biosynthesis; L-proline biosynthesis; L-glutamate 5-semialdehyde from L-glutamate: step 1/2. In terms of biological role, catalyzes the transfer of a phosphate group to glutamate to form L-glutamate 5-phosphate. This Geobacillus thermodenitrificans (strain NG80-2) protein is Glutamate 5-kinase.